The following is a 333-amino-acid chain: Mitochondrial glycine transporter (333 aa).

The interval 1–25 (MTNAATDKSVASVARDVSTGKPGKS) is disordered. 3 Solcar repeats span residues 26-109 (PDAA…MRAA), 127-220 (LLPM…FKND), and 236-319 (RSSV…LIKS). 6 helical membrane passes run 32 to 57 (LLSG…TRLQ), 84 to 110 (GAVP…RAAV), 133 to 158 (LATG…TRFE), 195 to 218 (GSVA…EGFK), 240 to 266 (INSS…KTRL), and 294 to 312 (GLSL…SWCI).

The protein belongs to the mitochondrial carrier (TC 2.A.29) family. SLC25A38 subfamily.

The protein resides in the mitochondrion inner membrane. It catalyses the reaction glycine(in) = glycine(out). In terms of biological role, mitochondrial glycine transporter that imports glycine into the mitochondrial matrix. Plays an important role in providing glycine for the first enzymatic step in heme biosynthesis, the condensation of glycine with succinyl-CoA to produce 5-aminolevulinate (ALA) in the mitochondrial matrix. This Scheffersomyces stipitis (strain ATCC 58785 / CBS 6054 / NBRC 10063 / NRRL Y-11545) (Yeast) protein is Mitochondrial glycine transporter.